We begin with the raw amino-acid sequence, 313 residues long: Pyrimidine-specific ribonucleoside hydrolase RihB (313 aa).

The Proton acceptor role is filled by Asp11. The Ca(2+) site is built by Asp11, Asp16, and Val124. 2 residues coordinate substrate: Gln227 and His239. A Ca(2+)-binding site is contributed by Asp240.

This sequence belongs to the IUNH family. RihB subfamily. As to quaternary structure, homotetramer. Ca(2+) serves as cofactor.

It catalyses the reaction a pyrimidine ribonucleoside + H2O = a pyrimidine nucleobase + D-ribose. Hydrolyzes cytidine or uridine to ribose and cytosine or uracil, respectively. Has a clear preference for cytidine over uridine. Strictly specific for ribonucleosides. The sequence is that of Pyrimidine-specific ribonucleoside hydrolase RihB from Escherichia coli O17:K52:H18 (strain UMN026 / ExPEC).